The following is a 378-amino-acid chain: Cytochrome b (378 aa).

Transmembrane regions (helical) follow at residues 34 to 54 (FGSL…FLAM), 78 to 99 (WFLR…FIHV), 114 to 134 (WMIG…GYVL), and 179 to 199 (FFTF…IHLL). 2 residues coordinate heme b: His84 and His98. Heme b is bound by residues His183 and His197. His202 provides a ligand contact to a ubiquinone. A run of 4 helical transmembrane segments spans residues 227–247 (YKDI…IWKF), 289–309 (LGGV…PFTH), 321–341 (LNQI…WIGA), and 348–368 (YVLT…INPL).

The protein belongs to the cytochrome b family. The main subunits of complex b-c1 are: cytochrome b, cytochrome c1 and the Rieske protein. It depends on heme b as a cofactor.

It localises to the mitochondrion inner membrane. In terms of biological role, component of the ubiquinol-cytochrome c reductase complex (complex III or cytochrome b-c1 complex) that is part of the mitochondrial respiratory chain. The b-c1 complex mediates electron transfer from ubiquinol to cytochrome c. Contributes to the generation of a proton gradient across the mitochondrial membrane that is then used for ATP synthesis. This chain is Cytochrome b, found in Aedes aegypti (Yellowfever mosquito).